A 197-amino-acid polypeptide reads, in one-letter code: Rac-like GTP-binding protein 6 (197 aa).

13 to 20 contacts GTP; the sequence is GDGAVGKT. The short motif at 35 to 43 is the Effector region element; sequence YVPTVFDNF. GTP contacts are provided by residues 60–64 and 118–121; these read DTAGQ and TKLD. The residue at position 194 (Cys194) is a Cysteine methyl ester. Cys194 carries S-geranylgeranyl cysteine lipidation. The propeptide at 195–197 is removed in mature form; the sequence is SIL.

This sequence belongs to the small GTPase superfamily. Rho family.

It is found in the cytoplasm. The protein resides in the membrane. In terms of biological role, inactive GDP-bound Rho GTPases reside in the cytosol, are found in a complex with Rho GDP-dissociation inhibitors (Rho GDIs), and are released from the GDI protein in order to translocate to membranes upon activation. The polypeptide is Rac-like GTP-binding protein 6 (RAC6) (Oryza sativa subsp. japonica (Rice)).